A 488-amino-acid chain; its full sequence is Glutamyl-tRNA(Gln) amidotransferase subunit A (488 aa).

Catalysis depends on charge relay system residues lysine 77 and serine 152. Serine 176 (acyl-ester intermediate) is an active-site residue.

This sequence belongs to the amidase family. GatA subfamily. As to quaternary structure, heterotrimer of A, B and C subunits.

The enzyme catalyses L-glutamyl-tRNA(Gln) + L-glutamine + ATP + H2O = L-glutaminyl-tRNA(Gln) + L-glutamate + ADP + phosphate + H(+). In terms of biological role, allows the formation of correctly charged Gln-tRNA(Gln) through the transamidation of misacylated Glu-tRNA(Gln) in organisms which lack glutaminyl-tRNA synthetase. The reaction takes place in the presence of glutamine and ATP through an activated gamma-phospho-Glu-tRNA(Gln). The chain is Glutamyl-tRNA(Gln) amidotransferase subunit A from Streptococcus pneumoniae (strain Hungary19A-6).